A 490-amino-acid chain; its full sequence is GTPase Der (490 aa).

2 EngA-type G domains span residues 3 to 166 (PVVA…MDDV) and 203 to 376 (IKLA…DSST). Residues 9–16 (GRPNVGKS), 56–60 (DTGGI), 118–121 (NKTD), 209–216 (GRPNVGKS), 256–260 (DTAGV), and 321–324 (NKWD) contribute to the GTP site. The KH-like domain maps to 377 to 461 (RRVSTAMLTR…PIRIQFKEGE (85 aa)).

It belongs to the TRAFAC class TrmE-Era-EngA-EngB-Septin-like GTPase superfamily. EngA (Der) GTPase family. In terms of assembly, associates with the 50S ribosomal subunit.

In terms of biological role, GTPase that plays an essential role in the late steps of ribosome biogenesis. In Salmonella enteritidis PT4 (strain P125109), this protein is GTPase Der.